The chain runs to 80 residues: Teretoxin Tan6.1 (80 aa).

A signal peptide spans 1–21; that stretch reads MATSGRLLCLCLVLGLVFESL. The propeptide occupies 22–34; the sequence is GHPGARLPKDGKR.

Belongs to the teretoxin M (TM) superfamily. In terms of processing, contains 3 disulfide bonds. In terms of tissue distribution, expressed by the venom duct.

Its subcellular location is the secreted. This Terebra anilis (Auger snail) protein is Teretoxin Tan6.1.